The sequence spans 159 residues: Large ribosomal subunit protein uL15 (159 aa).

Over residues 1-18 (MKLNEIRDNEGSSKDRIR) the composition is skewed to basic and acidic residues. The segment at 1–37 (MKLNEIRDNEGSSKDRIRVGRGIGSGKGKTGGRGVKG) is disordered. Residues 21–35 (RGIGSGKGKTGGRGV) are compositionally biased toward gly residues.

This sequence belongs to the universal ribosomal protein uL15 family. Part of the 50S ribosomal subunit.

Its function is as follows. Binds to the 23S rRNA. The polypeptide is Large ribosomal subunit protein uL15 (Agrobacterium fabrum (strain C58 / ATCC 33970) (Agrobacterium tumefaciens (strain C58))).